Here is a 708-residue protein sequence, read N- to C-terminus: Ion-translocating oxidoreductase complex subunit C (708 aa).

4Fe-4S ferredoxin-type domains are found at residues 369–397 (GEPQEEQSCIRCSACADACPADLLPQQLY) and 407–436 (KATTHNIADCIECGACAWVCPSNIPLVQYF). 8 residues coordinate [4Fe-4S] cluster: cysteine 377, cysteine 380, cysteine 383, cysteine 387, cysteine 416, cysteine 419, cysteine 422, and cysteine 426. Residues 630–682 (AKARKLEQQQANAEPEEQIDPRKAAVEAAIARAKARKLEQQQANAEPEEQIDP) are disordered.

The protein belongs to the 4Fe4S bacterial-type ferredoxin family. RnfC subfamily. In terms of assembly, the complex is composed of six subunits: RsxA, RsxB, RsxC, RsxD, RsxE and RsxG. Requires [4Fe-4S] cluster as cofactor.

The protein resides in the cell inner membrane. In terms of biological role, part of a membrane-bound complex that couples electron transfer with translocation of ions across the membrane. Required to maintain the reduced state of SoxR. The polypeptide is Ion-translocating oxidoreductase complex subunit C (Escherichia coli O1:K1 / APEC).